Consider the following 327-residue polypeptide: MTHLQAGLSPETLEKARLELNENPDTLHQDIQEVRDMVITRPDIGFLRTDDAFILRFLRARKFHHFEAFRLLAQYFEYRQQNLDMFKSFKATDPGIKQALKDGFPGGLANLDHYGRKILVLFAANWDQSRYTLVDILRAILLSLEAMIEDPELQVNGFVLIIDWSNFTFKQASKLTPSMLRLAIEGLQDSFPARFGGIHFVNQPWYIHALYTVIRPFLKEKTRKRIFLHGNNLNSLHQLIHPEILPSEFGGMLPPYDMGTWARTLLDHEYDDDSEYNVDSYSMPVKEVEKELSPKSMKRSQSVVDPTVLKRMDKNEEENMQPLLSLD.

Residues 96-257 (IKQALKDGFP…EFGGMLPPYD (162 aa)) form the CRAL-TRIO domain. The tract at residues 287-327 (EVEKELSPKSMKRSQSVVDPTVLKRMDKNEEENMQPLLSLD) is disordered. Serine 325 carries the phosphoserine modification.

In terms of assembly, forms a complex with clathrin heavy chain and gamma-adaptin.

The protein localises to the golgi apparatus. The protein resides in the trans-Golgi network membrane. It localises to the cytoplasmic vesicle. Its subcellular location is the clathrin-coated vesicle. It is found in the early endosome membrane. Functionally, required for normal morphology of late endosomes and/or lysosomes in neurons. Binds phosphatidylinositol 3,5-bisphosphate (PtdIns(3,5)P2). In Homo sapiens (Human), this protein is Clavesin-2 (CLVS2).